The chain runs to 231 residues: UPF0758 protein RBAM_025090 (231 aa).

One can recognise an MPN domain in the interval 109–231 (VIRSPEDGAK…FVSLKEKGYL (123 aa)). Zn(2+) contacts are provided by histidine 180, histidine 182, and aspartate 193. Residues 180-193 (HNHPSGDPTPSRED) carry the JAMM motif motif.

Belongs to the UPF0758 family.

The protein is UPF0758 protein RBAM_025090 of Bacillus velezensis (strain DSM 23117 / BGSC 10A6 / LMG 26770 / FZB42) (Bacillus amyloliquefaciens subsp. plantarum).